A 245-amino-acid chain; its full sequence is Chymotrypsinogen A (245 aa).

Cystine bridges form between cysteine 1–cysteine 122, cysteine 42–cysteine 58, cysteine 136–cysteine 201, cysteine 168–cysteine 182, and cysteine 191–cysteine 220. Residues 14-15 (SR) constitute a propeptide that is removed on maturation. One can recognise a Peptidase S1 domain in the interval 16-243 (IVNGEEAVPG…LVNWVQQTLA (228 aa)). Residues histidine 57 and aspartate 102 each act as charge relay system in the active site. Positions 147–148 (TN) are excised as a propeptide. Residue serine 195 is the Charge relay system of the active site.

It belongs to the peptidase S1 family.

It is found in the secreted. The protein resides in the extracellular space. It catalyses the reaction Preferential cleavage: Tyr-|-Xaa, Trp-|-Xaa, Phe-|-Xaa, Leu-|-Xaa.. The protein is Chymotrypsinogen A of Bos taurus (Bovine).